The following is a 428-amino-acid chain: Phosphomethylpyrimidine synthase 2 (428 aa).

Residues Met94, Tyr123, His162, 184-186 (SRG), 225-228 (NGMR), and Glu264 each bind substrate. A Zn(2+)-binding site is contributed by His268. Tyr291 serves as a coordination point for substrate. His332 provides a ligand contact to Zn(2+). [4Fe-4S] cluster-binding residues include Cys408, Cys411, and Cys415.

The protein belongs to the ThiC family. [4Fe-4S] cluster is required as a cofactor.

It catalyses the reaction 5-amino-1-(5-phospho-beta-D-ribosyl)imidazole + S-adenosyl-L-methionine = 4-amino-2-methyl-5-(phosphooxymethyl)pyrimidine + CO + 5'-deoxyadenosine + formate + L-methionine + 3 H(+). Its pathway is cofactor biosynthesis; thiamine diphosphate biosynthesis. Functionally, catalyzes the synthesis of the hydroxymethylpyrimidine phosphate (HMP-P) moiety of thiamine from aminoimidazole ribotide (AIR) in a radical S-adenosyl-L-methionine (SAM)-dependent reaction. The chain is Phosphomethylpyrimidine synthase 2 from Methanosarcina acetivorans (strain ATCC 35395 / DSM 2834 / JCM 12185 / C2A).